Here is a 528-residue protein sequence, read N- to C-terminus: MTSLLAAEVAKRRTFAIISHPDAGKTTITEKVLLFGQAIQTAGTVKGRGSNQHAKSDWMEMEKQRGISITTSVMQFPYHDCLVNLLDTPGHEDFSEDTYRTLTAVDCCLMVIDAAKGVEDRTRKLMEVTRLRDTPILTFMNKLDRDIRDPMELLDEVENELKIGCAPITWPIGCGKLFKGVYHLYKDETYLYQSGKGHTIQEVRIVKGLNNPDLDAAVGEDLAQQLRDELELVKGASNEFDKELFLAGEITPVFFGTALGNFGVDHMLDGLVEWAPAPMPRQTDTRTVEASEDKFTGFVFKIQANMDPKHRDRVAFMRVVSGKYEKGMKLRQVRTAKDVVISDALTFMAGDRSHVEEAYPGDILGLHNHGTIQIGDTFTQGEMMKFTGIPNFAPELFRRIRLKDPLKQKQLLKGLVQLSEEGAVQVFRPISNNDLIVGAVGVLQFDVVVARLKSEYNVEAVYESVNVATARWVECADAKKFEEFKRKNESQLALDGGDNLAYIATSMVNLRLAQERYPDVQFHQTREH.

Residues 10–279 (AKRRTFAIIS…GLVEWAPAPM (270 aa)) form the tr-type G domain. Residues 19 to 26 (SHPDAGKT), 87 to 91 (DTPGH), and 141 to 144 (NKLD) contribute to the GTP site.

Belongs to the TRAFAC class translation factor GTPase superfamily. Classic translation factor GTPase family. PrfC subfamily.

It localises to the cytoplasm. Functionally, increases the formation of ribosomal termination complexes and stimulates activities of RF-1 and RF-2. It binds guanine nucleotides and has strong preference for UGA stop codons. It may interact directly with the ribosome. The stimulation of RF-1 and RF-2 is significantly reduced by GTP and GDP, but not by GMP. This chain is Peptide chain release factor 3, found in Escherichia coli O1:K1 / APEC.